The primary structure comprises 161 residues: S-ribosylhomocysteine lyase (161 aa).

The Fe cation site is built by H57, H61, and C127.

The protein belongs to the LuxS family. Homodimer. It depends on Fe cation as a cofactor.

It catalyses the reaction S-(5-deoxy-D-ribos-5-yl)-L-homocysteine = (S)-4,5-dihydroxypentane-2,3-dione + L-homocysteine. Involved in the synthesis of autoinducer 2 (AI-2) which is secreted by bacteria and is used to communicate both the cell density and the metabolic potential of the environment. The regulation of gene expression in response to changes in cell density is called quorum sensing. Catalyzes the transformation of S-ribosylhomocysteine (RHC) to homocysteine (HC) and 4,5-dihydroxy-2,3-pentadione (DPD). The chain is S-ribosylhomocysteine lyase from Streptococcus equi subsp. equi (strain 4047).